Reading from the N-terminus, the 185-residue chain is Ribosome-recycling factor (185 aa).

Belongs to the RRF family.

Its subcellular location is the cytoplasm. Functionally, responsible for the release of ribosomes from messenger RNA at the termination of protein biosynthesis. May increase the efficiency of translation by recycling ribosomes from one round of translation to another. This Campylobacter jejuni subsp. doylei (strain ATCC BAA-1458 / RM4099 / 269.97) protein is Ribosome-recycling factor.